Here is a 332-residue protein sequence, read N- to C-terminus: L-lactate dehydrogenase A chain (332 aa).

Residues 29-57 (GAVG…IEDK) and R99 each bind NAD(+). Residues R106, N138, and R169 each contribute to the substrate site. Residue N138 participates in NAD(+) binding. The active-site Proton acceptor is H193. T248 is a binding site for substrate.

Belongs to the LDH/MDH superfamily. LDH family. In terms of assembly, homotetramer.

The protein localises to the cytoplasm. The enzyme catalyses (S)-lactate + NAD(+) = pyruvate + NADH + H(+). Its pathway is fermentation; pyruvate fermentation to lactate; (S)-lactate from pyruvate: step 1/1. Interconverts simultaneously and stereospecifically pyruvate and lactate with concomitant interconversion of NADH and NAD(+). This chain is L-lactate dehydrogenase A chain (LDHA), found in Sceloporus woodi (Florida scrub lizard).